Consider the following 1310-residue polypeptide: Cadherin-related family member 2 (1310 aa).

Positions 1 to 20 are cleaved as a signal peptide; the sequence is MAQLWLSCFLLPALVVSVAA. The Extracellular portion of the chain corresponds to 21 to 1154; the sequence is NVAPKFLANM…ESDLSKQLIS (1134 aa). Cadherin domains follow at residues 27–124, 125–241, and 242–353; these read LANM…APVF, QNTA…DPQF, and VREF…KPEF. Residues Asn29, Asn134, Asn182, Asn188, Asn195, Asn300, Asn355, Asn371, Asn401, Asn460, Asn565, Asn600, Asn616, Asn632, Asn680, Asn696, Asn701, Asn775, Asn821, Asn871, Asn877, Asn911, Asn932, and Asn1107 are each glycosylated (N-linked (GlcNAc...) asparagine). 6 Cadherin domains span residues 368 to 480, 481 to 586, 586 to 695, 696 to 808, 810 to 928, and 930 to 1058; these read AQVN…RPTF, PQSL…APVV, VSGS…LPIF, NQSS…PPTL, VASL…APYF, and PENK…TPKE. The chain crosses the membrane as a helical span at residues 1155-1175; sequence VIIGLGVALLLVLVIMTMAFV. At 1176–1310 the chain is on the cytoplasmic side; the sequence is CVRKSYNRKL…TNAGLDTTDL (135 aa). A mediates interaction with USH1C and MYO7B and is required for proper localization to microvilli tips and function in microvilli organization region spans residues 1180–1310; that stretch reads SYNRKLQAMK…TNAGLDTTDL (131 aa). Position 1248 is a phosphoserine (Ser1248). Residues 1259-1268 are compositionally biased toward basic and acidic residues; that stretch reads NSQEIKEHRP. The segment at 1259 to 1310 is disordered; sequence NSQEIKEHRPPHTPPEPDPEPLSVVLLGRQAGASGQLEGPSYTNAGLDTTDL. Ser1299 carries the post-translational modification Phosphoserine. The span at 1299–1310 shows a compositional bias: polar residues; that stretch reads SYTNAGLDTTDL.

Part of the IMAC/intermicrovillar adhesion complex/intermicrovillar tip-link complex composed of ANKS4B, MYO7B, USH1C, CDHR2 and CDHR5. Interacts with MAST2. Interacts (via cytoplasmic domain) with USH1C and MYO7B; required for proper localization of CDHR2 to microvilli tips and its function in brush border differentiation. As to expression, highly expressed in liver, kidney and colon. Moderately expressed in small intestine. Down-regulated in a number of liver and colon cancers. Expressed in duodenum with higher expression in enterocytes along the villus axis and lower expression in crypts (at protein level).

The protein localises to the apical cell membrane. The protein resides in the cell projection. It localises to the microvillus membrane. Its subcellular location is the cell junction. Intermicrovillar adhesion molecule that forms, via its extracellular domain, calcium-dependent heterophilic complexes with CDHR5 on adjacent microvilli. Thereby, controls the packing of microvilli at the apical membrane of epithelial cells. Through its cytoplasmic domain, interacts with microvillus cytoplasmic proteins to form the intermicrovillar adhesion complex/IMAC. This complex plays a central role in microvilli and epithelial brush border differentiation. May also play a role in cell-cell adhesion and contact inhibition in epithelial cells. The chain is Cadherin-related family member 2 from Homo sapiens (Human).